A 51-amino-acid polypeptide reads, in one-letter code: Ovomucoid (51 aa).

The region spanning 3-51 (IDCSGYPKPACTLEFFPLCGSDNQTYSNKCAFCNAAVEKNVTLNHIGEC) is the Kazal-like domain. Cystine bridges form between C5–C35, C13–C32, and C21–C51. N42 is a glycosylation site (N-linked (GlcNAc...) asparagine).

Its subcellular location is the secreted. The chain is Ovomucoid from Eudromia elegans (Elegant crested-tinamou).